We begin with the raw amino-acid sequence, 160 residues long: SsrA-binding protein (160 aa).

Positions lysine 136–aspartate 160 are disordered.

Belongs to the SmpB family.

It is found in the cytoplasm. In terms of biological role, required for rescue of stalled ribosomes mediated by trans-translation. Binds to transfer-messenger RNA (tmRNA), required for stable association of tmRNA with ribosomes. tmRNA and SmpB together mimic tRNA shape, replacing the anticodon stem-loop with SmpB. tmRNA is encoded by the ssrA gene; the 2 termini fold to resemble tRNA(Ala) and it encodes a 'tag peptide', a short internal open reading frame. During trans-translation Ala-aminoacylated tmRNA acts like a tRNA, entering the A-site of stalled ribosomes, displacing the stalled mRNA. The ribosome then switches to translate the ORF on the tmRNA; the nascent peptide is terminated with the 'tag peptide' encoded by the tmRNA and targeted for degradation. The ribosome is freed to recommence translation, which seems to be the essential function of trans-translation. The protein is SsrA-binding protein of Pseudomonas putida (strain GB-1).